A 1074-amino-acid chain; its full sequence is Semaphorin-5A (1074 aa).

A signal peptide spans 1 to 22 (MKGACILAWLFSSLGVWRLARP). In terms of domain architecture, Sema spans 35–484 (HPVVSYKEIG…LQEHVVKIPL (450 aa)). 2 disulfides stabilise this stretch: Cys104/Cys114 and Cys131/Cys140. 4 N-linked (GlcNAc...) asparagine glycosylation sites follow: Asn147, Asn168, Asn227, and Asn277. 2 cysteine pairs are disulfide-bonded: Cys254/Cys357 and Cys278/Cys320. Residues Asn323 and Asn367 are each glycosylated (N-linked (GlcNAc...) asparagine). The region spanning 486–533 (RCHFHQTRGACIGAQDPYCGWDAVMKKCTSLEESLSMTQWDQSVPTCP) is the PSI domain. 2 N-linked (GlcNAc...) asparagine glycosylation sites follow: Asn536 and Asn591. TSP type-1 domains are found at residues 540–593 (DGSF…TNCS), 595–651 (NGGW…LLCP), and 653–702 (HVFW…NACP). Cystine bridges form between Cys607/Cys644, Cys611/Cys650, Cys622/Cys634, Cys665/Cys696, Cys669/Cys701, and Cys680/Cys686. The N-linked (GlcNAc...) asparagine glycan is linked to Asn717. 3 consecutive TSP type-1 domains span residues 784-839 (NGAW…LPCP), 841-896 (DGVW…QTCP), and 897-944 (ENWS…VFDS). Intrachain disulfides connect Cys796-Cys833, Cys800-Cys838, Cys811-Cys823, Cys853-Cys890, Cys857-Cys895, and Cys868-Cys880. N-linked (GlcNAc...) asparagine glycosylation is found at Asn898 and Asn933. A helical membrane pass occupies residues 969-989 (FHMMAVGLSSSILGCLLTLLV). N-linked (GlcNAc...) asparagine glycosylation occurs at Asn1015.

Binds PLXNB3.

The protein localises to the membrane. Bifunctional axonal guidance cue regulated by sulfated proteoglycans; attractive effects result from interactions with heparan sulfate proteoglycans (HSPGs), while the inhibitory effects depend on interactions with chondroitin sulfate proteoglycans (CSPGs). Ligand for receptor PLXNB3. In glioma cells, SEMA5A stimulation of PLXNB3 results in the disassembly of F-actin stress fibers, disruption of focal adhesions and cellular collapse as well as inhibition of cell migration and invasion through ARHGDIA-mediated inactivation of RAC1. May promote angiogenesis by increasing endothelial cell proliferation and migration and inhibiting apoptosis. This Rattus norvegicus (Rat) protein is Semaphorin-5A (Sema5a).